Consider the following 607-residue polypeptide: UvrABC system protein C (607 aa).

Residues 16 to 94 (GRPGVYRMFD…IKEWRPPYNI (79 aa)) enclose the GIY-YIG domain. The region spanning 203-238 (NALTDELSAGMEQAASTLDFEKAAELRDQISLLRRV) is the UVR domain.

This sequence belongs to the UvrC family. As to quaternary structure, interacts with UvrB in an incision complex.

Its subcellular location is the cytoplasm. Functionally, the UvrABC repair system catalyzes the recognition and processing of DNA lesions. UvrC both incises the 5' and 3' sides of the lesion. The N-terminal half is responsible for the 3' incision and the C-terminal half is responsible for the 5' incision. The chain is UvrABC system protein C from Pseudomonas protegens (strain DSM 19095 / LMG 27888 / CFBP 6595 / CHA0).